Here is a 335-residue protein sequence, read N- to C-terminus: Phosphatidylcholine:ceramide cholinephosphotransferase 2 (335 aa).

Helical transmembrane passes span 60–80 (LTAF…LTVI), 104–124 (WSVG…IIFL), 136–156 (FLLG…TFLP), 200–220 (ILCG…MYFV), and 229–249 (LVIL…ALVV). His210 is an active-site residue. Residues His253 and Asp257 contribute to the active site. A helical membrane pass occupies residues 258–278 (VLIAYWLTSHVFWSYHQIFEM). Over 279 to 335 (RKDDRPQAPLSRLWWFWLCYWFESDVADGKLVNKWNWPLEGPQRMHTIMNRINYKLQ) the chain is Cytoplasmic.

Belongs to the sphingomyelin synthase family.

The protein resides in the membrane. It carries out the reaction an N-acylsphing-4-enine + a 1,2-diacyl-sn-glycero-3-phosphocholine = a sphingomyelin + a 1,2-diacyl-sn-glycerol. It catalyses the reaction an N-acyl-15-methylhexadecasphing-4-enine + a 1,2-diacyl-sn-glycero-3-phosphocholine = an N-acyl-15-methylhexadecasphing-4-enine-1-phosphocholine + a 1,2-diacyl-sn-glycerol. It functions in the pathway lipid metabolism; sphingolipid metabolism. Sphingomyelin synthases (SM synthase or SMS) synthesize the sphingolipid sphingomyelin (SM) through transfer of the phosphatidyl head group of 1,2-diacyl-sn-glycero-3-phosphocholine (phosphatidylcholine, PC) on to the primary hydroxyl of ceramide (N-acylsphingoid base), yielding 1,2-diacyl-sn-glycerol (diacylglycerol, DAG) as a side product. Functions as a bidirectional lipid cholinephosphotransferases capable of converting PC and ceramide to SM and DAG and vice versa depending on the respective levels of ceramide and DAG as phosphocholine acceptors, respectively. The chain is Phosphatidylcholine:ceramide cholinephosphotransferase 2 (sms-2) from Caenorhabditis elegans.